Reading from the N-terminus, the 154-residue chain is Superoxide dismutase [Cu-Zn] (154 aa).

Residues H47, H49, and H64 each coordinate Cu cation. Residues C58 and C147 are joined by a disulfide bond. Zn(2+) is bound by residues H64, H72, H81, and D84. Residue H121 coordinates Cu cation. Residue R144 coordinates substrate.

It belongs to the Cu-Zn superoxide dismutase family. As to quaternary structure, homodimer. The cofactor is Cu cation. It depends on Zn(2+) as a cofactor.

It is found in the cytoplasm. It catalyses the reaction 2 superoxide + 2 H(+) = H2O2 + O2. Destroys radicals which are normally produced within the cells and which are toxic to biological systems. The polypeptide is Superoxide dismutase [Cu-Zn] (SOD1) (Podospora anserina (Pleurage anserina)).